Consider the following 611-residue polypeptide: Calmegin (611 aa).

An N-terminal signal peptide occupies residues 1-19 (MRFQGVGLCLGLLFITVNA). At 20-471 (DFMDDGVEVE…LVIAAEERPW (452 aa)) the chain is on the lumenal side. The residue at position 128 (lysine 128) is an N6-acetyllysine. The cysteines at positions 151 and 185 are disulfide-linked. The disordered stretch occupies residues 254 to 335 (LDDVVPPINP…KAEKPEDWSD (82 aa)). A compositionally biased stretch (basic and acidic residues) spans 265-284 (REIDDPSDKKPEEWDDRAKI). A run of 8 repeats spans residues 267 to 280 (IDDPSDKKPEEWDD), 284 to 297 (IPDPTAVRPEDWDE), 303 to 316 (IEDSSAVKPDGWLD), 322 to 335 (IPNPKAEKPEDWSD), 339 to 352 (GEWEAPHIPNPACQ), 356 to 369 (GEWKPPMIDNPKYK), 370 to 383 (GIWRPPMINNPNYQ), and 384 to 397 (GLWSPQKIPNPDYF). An interaction with PPIB region spans residues 317–350 (DEPKFIPNPKAEKPEDWSDDMDGEWEAPHIPNPA). An intrachain disulfide couples cysteine 351 to cysteine 355. A helical membrane pass occupies residues 472–492 (LWLMYLVMAGLPVALVASFCW). Topologically, residues 493–611 (PRKVKKKYED…SLRKRRVRKD (119 aa)) are cytoplasmic. A disordered region spans residues 517–611 (AALEQEAEEE…SLRKRRVRKD (95 aa)). The segment covering 526–584 (EKAPEKPEDVQEEKKPGEAEVVTVEKEVIGEPEEKSKEDRETLEGQEEVSKLSKSGSED) has biased composition (basic and acidic residues). Phosphoserine occurs at positions 561, 578, 580, 582, 592, 595, and 602. Positions 602–611 (SLRKRRVRKD) are enriched in basic residues.

Belongs to the calreticulin family. In terms of assembly, interacts with PDILT and PPIB. Interacts with ADAM2. Interacts with ADAM1A, ADAM1B and ADAM3; these are protein-coding genes in mouse but may be pseudogenes in other organisms. Detected in testis (at protein level). Detected in testis.

The protein resides in the endoplasmic reticulum membrane. Functionally, functions during spermatogenesis as a chaperone for a range of client proteins that are important for sperm adhesion onto the egg zona pellucida and for subsequent penetration of the zona pellucida. Required for normal sperm migration from the uterus into the oviduct. Required for normal male fertility. Binds calcium ions. The sequence is that of Calmegin (Clgn) from Mus musculus (Mouse).